Here is a 187-residue protein sequence, read N- to C-terminus: MQKRNPSVQLALNGTPIYLNNILMSVSVKREEKDMSGQKSSTKKSDKGVKAKELSVTGFIPYNRKEWLTQLFNLAEAETGKGEQTKYRVSCTVAEAVNMREVQFSGEVSATEQNGQLGWSISFRLREVNSVAEKKDQRKKKPKVKTQGENAPVAKSAGENSGKLEEQKDERKGIAKDIDDFFGGIDG.

The interval 131-187 is disordered; sequence VAEKKDQRKKKPKVKTQGENAPVAKSAGENSGKLEEQKDERKGIAKDIDDFFGGIDG. The span at 162-179 shows a compositional bias: basic and acidic residues; sequence GKLEEQKDERKGIAKDID.

This is an uncharacterized protein from Haemophilus influenzae (Bacteriophage HP1).